A 511-amino-acid chain; its full sequence is ATP synthase subunit alpha (511 aa).

169-176 lines the ATP pocket; sequence GDRQTGKT.

Belongs to the ATPase alpha/beta chains family. In terms of assembly, F-type ATPases have 2 components, CF(1) - the catalytic core - and CF(0) - the membrane proton channel. CF(1) has five subunits: alpha(3), beta(3), gamma(1), delta(1), epsilon(1). CF(0) has three main subunits: a(1), b(2) and c(9-12). The alpha and beta chains form an alternating ring which encloses part of the gamma chain. CF(1) is attached to CF(0) by a central stalk formed by the gamma and epsilon chains, while a peripheral stalk is formed by the delta and b chains.

It localises to the cell inner membrane. The catalysed reaction is ATP + H2O + 4 H(+)(in) = ADP + phosphate + 5 H(+)(out). Functionally, produces ATP from ADP in the presence of a proton gradient across the membrane. The alpha chain is a regulatory subunit. The chain is ATP synthase subunit alpha from Paracoccus denitrificans (strain Pd 1222).